Reading from the N-terminus, the 215-residue chain is Guanylate kinase (215 aa).

One can recognise a Guanylate kinase-like domain in the interval 9–187; the sequence is GTLYIVSAPS…ALDELSCLVH (179 aa). An ATP-binding site is contributed by 16 to 23; it reads APSGAGKT.

The protein belongs to the guanylate kinase family.

Its subcellular location is the cytoplasm. The catalysed reaction is GMP + ATP = GDP + ADP. Its function is as follows. Essential for recycling GMP and indirectly, cGMP. In Chromohalobacter salexigens (strain ATCC BAA-138 / DSM 3043 / CIP 106854 / NCIMB 13768 / 1H11), this protein is Guanylate kinase.